The following is a 692-amino-acid chain: Serine/threonine-protein kinase Nek8 (692 aa).

A Protein kinase domain is found at Tyr4–Cys258. Residues Val10 to Val18 and Lys33 contribute to the ATP site. The active-site Proton acceptor is Asp128. Phosphothreonine; by autocatalysis is present on Thr162. Residues Ala277–Gly301 are disordered. Polar residues predominate over residues Ala282–Val293. RCC1 repeat units lie at residues Ser312–Ser350, Gly410–Glu461, Arg462–Pro513, Gly580–Glu631, and Ser632–Ser684.

It belongs to the protein kinase superfamily. NEK Ser/Thr protein kinase family. NIMA subfamily. In terms of assembly, interacts with PKD2; may regulate PKD2 targeting to the cilium. Interacts with ANKS6. Component of a complex containing at least ANKS6, INVS, NEK8 and NPHP3. ANKS6 may organize complex assembly by linking INVS and NPHP3 to NEK8 and INVS may target the complex to the proximal ciliary axoneme. Interacts with ANKS3. The cofactor is Mg(2+). In terms of tissue distribution, highest expression in thyroid, adrenal gland and skin. Low levels in spleen, colon and uterus. Overexpressed in breast tumors, with highest expression in infiltrating ductal carcinomas and moderate levels in mucinous adenocarcinoma.

It localises to the cytoplasm. It is found in the cytoskeleton. Its subcellular location is the cell projection. The protein localises to the cilium. The protein resides in the microtubule organizing center. It localises to the centrosome. It is found in the cilium axoneme. The enzyme catalyses L-seryl-[protein] + ATP = O-phospho-L-seryl-[protein] + ADP + H(+). The catalysed reaction is L-threonyl-[protein] + ATP = O-phospho-L-threonyl-[protein] + ADP + H(+). Functionally, required for renal tubular integrity. May regulate local cytoskeletal structure in kidney tubule epithelial cells. May regulate ciliary biogenesis through targeting of proteins to the cilia. Plays a role in organogenesis, and is involved in the regulation of the Hippo signaling pathway. The polypeptide is Serine/threonine-protein kinase Nek8 (NEK8) (Homo sapiens (Human)).